The chain runs to 166 residues: 6,7-dimethyl-8-ribityllumazine synthase (166 aa).

5-amino-6-(D-ribitylamino)uracil is bound by residues Phe24, 58–60 (ALE), and 82–84 (AVI). (2S)-2-hydroxy-3-oxobutyl phosphate is bound at residue 87-88 (ET). His90 (proton donor) is an active-site residue. Asn115 lines the 5-amino-6-(D-ribitylamino)uracil pocket. Arg129 contacts (2S)-2-hydroxy-3-oxobutyl phosphate.

The protein belongs to the DMRL synthase family.

It catalyses the reaction (2S)-2-hydroxy-3-oxobutyl phosphate + 5-amino-6-(D-ribitylamino)uracil = 6,7-dimethyl-8-(1-D-ribityl)lumazine + phosphate + 2 H2O + H(+). It participates in cofactor biosynthesis; riboflavin biosynthesis; riboflavin from 2-hydroxy-3-oxobutyl phosphate and 5-amino-6-(D-ribitylamino)uracil: step 1/2. Its function is as follows. Catalyzes the formation of 6,7-dimethyl-8-ribityllumazine by condensation of 5-amino-6-(D-ribitylamino)uracil with 3,4-dihydroxy-2-butanone 4-phosphate. This is the penultimate step in the biosynthesis of riboflavin. The polypeptide is 6,7-dimethyl-8-ribityllumazine synthase (Ralstonia pickettii (strain 12J)).